Reading from the N-terminus, the 253-residue chain is Patatin-like phospholipase domain-containing protein 4 (253 aa).

One can recognise a PNPLA domain in the interval 6–176; that stretch reads LSFAACGFLG…TNALPILPVG (171 aa). The short motif at 41-45 is the GXSXG element; that stretch reads GASAG. Catalysis depends on S43, which acts as the Nucleophile. The Proton acceptor role is filled by D163. The DGA/G signature appears at 163–165; the sequence is DGG.

Expressed in all tissues examined, including heart, brain, placenta, lung, liver, muscle, kidney, pancreas and spleen.

It is found in the mitochondrion. The enzyme catalyses a triacylglycerol + H2O = a diacylglycerol + a fatty acid + H(+). The catalysed reaction is a 1,2-diacyl-sn-glycero-3-phosphocholine + H2O = a 1-acyl-sn-glycero-3-phosphocholine + a fatty acid + H(+). It catalyses the reaction an all-trans-retinyl ester + H2O = all-trans-retinol + a fatty acid + H(+). It carries out the reaction 2 a 1-acylglycerol = a 1,2-diacylglycerol + glycerol. The enzyme catalyses a 1-acylglycerol + a 1,2-diacylglycerol = a triacylglycerol + glycerol. The catalysed reaction is a 1-acylglycerol + a 1,3-diacylglycerol = a triacylglycerol + glycerol. It catalyses the reaction a triacylglycerol + H2O = a 1,2-diacylglycerol + a fatty acid + H(+). It carries out the reaction a triacylglycerol + H2O = a 1,3-diacylglycerol + a fatty acid + H(+). The enzyme catalyses a triacylglycerol + all-trans-retinol = an all-trans-retinyl ester + a diacylglycerol. The catalysed reaction is 2 1-(9Z-octadecenoyl)-glycerol = 1,2-di-(9Z-octadecenoyl)-glycerol + glycerol. It catalyses the reaction 1-(9Z-octadecenoyl)-glycerol + 1,2-di-(9Z-octadecenoyl)-glycerol = 1,2,3-tri-(9Z-octadecenoyl)-glycerol + glycerol. It carries out the reaction 1-(9Z-octadecenoyl)-glycerol + 1,3-di-(9Z-octadecenoyl)-glycerol = 1,2,3-tri-(9Z-octadecenoyl)-glycerol + glycerol. The enzyme catalyses 1,2-di-(9Z-octadecenoyl)-glycerol + (9Z)-octadecenoate + H(+) = 1,2,3-tri-(9Z-octadecenoyl)-glycerol + H2O. The catalysed reaction is 1,2,3-tri-(9Z-octadecenoyl)-glycerol + H2O = 1,3-di-(9Z-octadecenoyl)-glycerol + (9Z)-octadecenoate + H(+). It catalyses the reaction all-trans-retinyl hexadecanoate + H2O = all-trans-retinol + hexadecanoate + H(+). It carries out the reaction 1,2,3-tri-(9Z-octadecenoyl)-glycerol + all-trans-retinol = all-trans-retinyl 9Z-octadecenoate + di-(9Z)-octadecenoylglycerol. With respect to regulation, the triglyceride lipase activity is inhibited by BEL ((E)-6-(bromomethylene)-3-(1-naphthalenyl)-2H-tetrahydropyran-2-one), a suicide substrate inhibitor. Its function is as follows. Has abundant triacylglycerol lipase activity. Transfers fatty acid from triglyceride to retinol, hydrolyzes retinylesters, and generates 1,3-diacylglycerol from triglycerides. Additionally possesses acylglycerol transacylase and phospholipase A2 activities. The sequence is that of Patatin-like phospholipase domain-containing protein 4 from Homo sapiens (Human).